Here is a 529-residue protein sequence, read N- to C-terminus: Calcium-dependent protein kinase 3 (529 aa).

Residues 1–73 (MGHRHSKSKS…GRILGRPMEE (73 aa)) form a disordered region. Gly2 carries N-myristoyl glycine lipidation. Positions 39 to 53 (SGSGTVGSSGSGTGG) are enriched in gly residues. In terms of domain architecture, Protein kinase spans 78–336 (YEFGRELGRG…AAEVLNHPWI (259 aa)). ATP contacts are provided by residues 84 to 92 (LGRGQFGVT) and Lys107. The active-site Proton acceptor is the Asp202. Phosphoserine is present on Ser242. Residues 342–372 (ASDKPLDNAVLSRMKQFRAMNKLKKMALKVI) are autoinhibitory domain. EF-hand domains follow at residues 379 to 414 (EEIIGLKEMFKSLDTDNNGIVTLEELRTGLPKLGSK), 415 to 450 (ISEAEIRQLMEAADMDGDGSIDYLEFISATMHMNRI), 451 to 485 (EREDHLYTAFQFFDNDNSGYITMEELELAMKKYNM), and 486 to 521 (GDDKSIKEIIAEVDTDRDGKINYEEFVAMMKKGNPE). Residues Asp392, Asp394, Asn396, Glu403, Asp428, Asp430, Asp432, Ser434, Glu439, Asp464, Asp466, Ser468, Tyr470, Glu475, Asp499, Asp501, Asp503, Lys505, and Glu510 each coordinate Ca(2+).

Belongs to the protein kinase superfamily. Ser/Thr protein kinase family. CDPK subfamily. In terms of assembly, interacts with GHR1. Expressed in both guard cells and mesophyll cells.

It is found in the cytoplasm. The protein resides in the nucleus. The catalysed reaction is L-seryl-[protein] + ATP = O-phospho-L-seryl-[protein] + ADP + H(+). The enzyme catalyses L-threonyl-[protein] + ATP = O-phospho-L-threonyl-[protein] + ADP + H(+). Activated by calcium. Autophosphorylation may play an important role in the regulation of the kinase activity. May play a role in signal transduction pathways that involve calcium as a second messenger. Functions in abscisic acid (ABA) regulation of guard cell S-type anion- and Ca(2+)-permeable channels and stomatal closure. This chain is Calcium-dependent protein kinase 3, found in Arabidopsis thaliana (Mouse-ear cress).